The following is a 1234-amino-acid chain: DNA-directed RNA polymerase subunit beta (1234 aa).

This sequence belongs to the RNA polymerase beta chain family. The RNAP catalytic core consists of 2 alpha, 1 beta, 1 beta' and 1 omega subunit. When a sigma factor is associated with the core the holoenzyme is formed, which can initiate transcription.

The catalysed reaction is RNA(n) + a ribonucleoside 5'-triphosphate = RNA(n+1) + diphosphate. Functionally, DNA-dependent RNA polymerase catalyzes the transcription of DNA into RNA using the four ribonucleoside triphosphates as substrates. In Clostridium perfringens (strain ATCC 13124 / DSM 756 / JCM 1290 / NCIMB 6125 / NCTC 8237 / Type A), this protein is DNA-directed RNA polymerase subunit beta.